Reading from the N-terminus, the 248-residue chain is Protein-lysine N-methyltransferase EFM5 (248 aa).

It belongs to the class I-like SAM-binding methyltransferase superfamily. EFM5 family.

It is found in the cytoplasm. Functionally, S-adenosyl-L-methionine-dependent protein-lysine N-methyltransferase that trimethylates elongation factor 1-alpha (TEF1 and TEF2) at 'Lys-79'. Required for replication of Brome mosaic virus (BMV). This is Protein-lysine N-methyltransferase EFM5 from Saccharomyces cerevisiae (strain ATCC 204508 / S288c) (Baker's yeast).